Consider the following 525-residue polypeptide: ESX-1 secretion-associated protein EspE (525 aa).

Disordered regions lie at residues Ala244–Ala341 and Ala375–His494. Positions Asp248–Ala258 are enriched in acidic residues. A compositionally biased stretch (basic and acidic residues) spans Glu274–Asn286. Over residues Ser292–Ala306 the composition is skewed to gly residues. 3 stretches are compositionally biased toward low complexity: residues Pro307–Pro319, Thr332–Ala341, and Ala375–Pro397. Positions Asp411–Thr440 are enriched in basic and acidic residues.

It is found in the cytoplasm. The sequence is that of ESX-1 secretion-associated protein EspE from Mycolicibacterium smegmatis (strain ATCC 700084 / mc(2)155) (Mycobacterium smegmatis).